A 618-amino-acid chain; its full sequence is Nuclear cap-binding protein subunit 3 (618 aa).

The segment at 1-53 is disordered; the sequence is MAAVRGLRVSVKAGGGAEPEPMEVEEGEVEAAAGRTSPVEATADQTSPREVVP. Residues 20-29 are compositionally biased toward acidic residues; that stretch reads EPMEVEEGEV. The RNA recognition motif (RRM) domain stretch occupies residues 117 to 178; that stretch reads ETLYICGVDE…LSSKPTNEKG (62 aa). The WLDD motif; essential for 7-methylguanosine-containing mRNA cap binding signature appears at 146 to 149; the sequence is WLDD. Disordered regions lie at residues 170-250, 342-366, and 426-618; these read SSKP…DLRP, PEEPIEEEEEEEEEEEEDMDEDDRV, and QLKT…DTDS. Residues 174-188 are compositionally biased toward basic and acidic residues; it reads TNEKGQRKKDGEHRS. Residues 205–223 show a composition bias toward acidic residues; the sequence is DETEEGEVEEDNPNDAEVE. The segment covering 231–240 has biased composition (polar residues); sequence PPETLSQAEQ. Residues 344-365 are compositionally biased toward acidic residues; sequence EPIEEEEEEEEEEEEDMDEDDR. The segment covering 436–450 has biased composition (polar residues); sequence SDSAGNSVKSRIGSK. Over residues 451–468 the composition is skewed to basic and acidic residues; it reads SHSEKPADVRLILEEKRQ. Over residues 469-481 the composition is skewed to low complexity; the sequence is STASRQQSSSSGK. Basic and acidic residues-rich tracts occupy residues 507–517, 550–562, and 583–596; these read SRREPLSDVHS, PKEKDRASEKSGE, and IKEKEQIRQKKSRL. Low complexity predominate over residues 609-618; the sequence is ESSSGSDTDS.

It belongs to the NCBP3 family. As to quaternary structure, component of an alternative cap-binding complex (CBC) composed of NCBP1/CBP80 and NCBP3.

It localises to the nucleus. Its subcellular location is the cytoplasm. Functionally, associates with NCBP1/CBP80 to form an alternative cap-binding complex (CBC) which plays a key role in mRNA export. NCBP3 serves as adapter protein linking the capped RNAs (m7GpppG-capped RNA) to NCBP1/CBP80. Unlike the conventional CBC with NCBP2 which binds both small nuclear RNA (snRNA) and messenger (mRNA) and is involved in their export from the nucleus, the alternative CBC with NCBP3 does not bind snRNA and associates only with mRNA thereby playing a role in only mRNA export. The protein is Nuclear cap-binding protein subunit 3 of Xenopus laevis (African clawed frog).